We begin with the raw amino-acid sequence, 221 residues long: uncharacterized protein (221 aa).

This is an uncharacterized protein from Methanocaldococcus jannaschii (strain ATCC 43067 / DSM 2661 / JAL-1 / JCM 10045 / NBRC 100440) (Methanococcus jannaschii).